The sequence spans 318 residues: Protein RecA (318 aa).

53-60 (GPESSGKT) lines the ATP pocket.

This sequence belongs to the RecA family.

It is found in the cytoplasm. In terms of biological role, can catalyze the hydrolysis of ATP in the presence of single-stranded DNA, the ATP-dependent uptake of single-stranded DNA by duplex DNA, and the ATP-dependent hybridization of homologous single-stranded DNAs. It interacts with LexA causing its activation and leading to its autocatalytic cleavage. In Bacteroides fragilis (strain YCH46), this protein is Protein RecA.